We begin with the raw amino-acid sequence, 327 residues long: Zinc transport protein ZntB (327 aa).

Residues 1–273 (MDAIKGSELQ…ARRTYTMSLM (273 aa)) are Cytoplasmic-facing. A helical transmembrane segment spans residues 274-294 (AMVFLPSTFLTGLFGVNLGGI). Residues 295-300 (PGNSWH) lie on the Periplasmic side of the membrane. Residues 301 to 321 (LGFSLFCLMLVVVIGGVAWWL) form a helical membrane-spanning segment. Residues 322 to 327 (HRSKWL) lie on the Cytoplasmic side of the membrane.

Belongs to the CorA metal ion transporter (MIT) (TC 1.A.35) family.

It is found in the cell inner membrane. The enzyme catalyses Zn(2+)(out) + H(+)(out) = Zn(2+)(in) + H(+)(in). Its function is as follows. Zinc transporter. Acts as a Zn(2+):proton symporter, which likely mediates zinc ion uptake. This is Zinc transport protein ZntB from Klebsiella pneumoniae subsp. pneumoniae (strain ATCC 700721 / MGH 78578).